Here is a 295-residue protein sequence, read N- to C-terminus: 4-diphosphocytidyl-2-C-methyl-D-erythritol kinase (295 aa).

Residue lysine 25 is part of the active site. 108–118 (PMGSGLGGGSS) provides a ligand contact to ATP. Residue aspartate 150 is part of the active site.

The protein belongs to the GHMP kinase family. IspE subfamily.

The catalysed reaction is 4-CDP-2-C-methyl-D-erythritol + ATP = 4-CDP-2-C-methyl-D-erythritol 2-phosphate + ADP + H(+). Its pathway is isoprenoid biosynthesis; isopentenyl diphosphate biosynthesis via DXP pathway; isopentenyl diphosphate from 1-deoxy-D-xylulose 5-phosphate: step 3/6. Its function is as follows. Catalyzes the phosphorylation of the position 2 hydroxy group of 4-diphosphocytidyl-2C-methyl-D-erythritol. In Pasteurella multocida (strain Pm70), this protein is 4-diphosphocytidyl-2-C-methyl-D-erythritol kinase.